A 185-amino-acid chain; its full sequence is Ribosome-recycling factor (185 aa).

This sequence belongs to the RRF family.

Its subcellular location is the cytoplasm. Responsible for the release of ribosomes from messenger RNA at the termination of protein biosynthesis. May increase the efficiency of translation by recycling ribosomes from one round of translation to another. The sequence is that of Ribosome-recycling factor from Streptococcus pneumoniae (strain 70585).